The primary structure comprises 211 residues: Probable chemoreceptor glutamine deamidase CheD (211 aa).

Belongs to the CheD family.

The enzyme catalyses L-glutaminyl-[protein] + H2O = L-glutamyl-[protein] + NH4(+). In terms of biological role, probably deamidates glutamine residues to glutamate on methyl-accepting chemotaxis receptors (MCPs), playing an important role in chemotaxis. This is Probable chemoreceptor glutamine deamidase CheD from Hahella chejuensis (strain KCTC 2396).